A 387-amino-acid chain; its full sequence is Phosphoglycerate kinase (387 aa).

Residues 21 to 23, R36, 59 to 62, R113, and R146 each bind substrate; these read DLN and HLGR. ATP is bound by residues K197, E314, and 340–343; that span reads GGDT.

This sequence belongs to the phosphoglycerate kinase family. In terms of assembly, monomer.

The protein localises to the cytoplasm. It carries out the reaction (2R)-3-phosphoglycerate + ATP = (2R)-3-phospho-glyceroyl phosphate + ADP. Its pathway is carbohydrate degradation; glycolysis; pyruvate from D-glyceraldehyde 3-phosphate: step 2/5. In Aliivibrio fischeri (strain MJ11) (Vibrio fischeri), this protein is Phosphoglycerate kinase.